Consider the following 547-residue polypeptide: Chaperonin GroEL (547 aa).

ATP is bound by residues threonine 30–proline 33, lysine 51, aspartate 87–threonine 91, glycine 415, asparagine 479–alanine 481, and aspartate 495.

This sequence belongs to the chaperonin (HSP60) family. In terms of assembly, forms a cylinder of 14 subunits composed of two heptameric rings stacked back-to-back. Interacts with the co-chaperonin GroES.

Its subcellular location is the cytoplasm. The catalysed reaction is ATP + H2O + a folded polypeptide = ADP + phosphate + an unfolded polypeptide.. Together with its co-chaperonin GroES, plays an essential role in assisting protein folding. The GroEL-GroES system forms a nano-cage that allows encapsulation of the non-native substrate proteins and provides a physical environment optimized to promote and accelerate protein folding. The sequence is that of Chaperonin GroEL from Acinetobacter baumannii (strain ACICU).